The sequence spans 525 residues: Zwittermicin A synthase ZmaJ (525 aa).

Belongs to the ATP-dependent AMP-binding enzyme family.

It catalyses the reaction holo-[peptidyl-carrier protein] + L-serine + ATP = L-seryl-[peptidyl-carrier protein] + AMP + diphosphate. The protein operates within antibiotic biosynthesis. Functionally, involved in the biosynthesis of the linear aminopolyol antibiotic zwittermicin A (ZmA). Specifically adenylates L-serine and loads it onto the holo form of ZmaH via a thioester linkage to the phosphopanthetheine moiety. This Bacillus cereus protein is Zwittermicin A synthase ZmaJ.